A 659-amino-acid polypeptide reads, in one-letter code: Heparin-sulfate lyase (659 aa).

Positions 1–24 (MTTKIFKRIIVFAVIALSSGNILA) are cleaved as a signal peptide. Catalysis depends on tyrosine 294, which acts as the Proton acceptor.

The protein belongs to the polysaccharide lyase 12 family.

It is found in the periplasm. It catalyses the reaction Elimination of sulfate, appears to act on linkages between N-acetyl-D-glucosamine and uronate. Product is an unsaturated sugar.. In terms of biological role, specifically cleaves heparan sulfate-rich regions of acidic polysaccharides. Does not act on N,O-desulfated glucosamine or N-acetyl-O-sulfated glucosamine linkages. Functions in cleaving metazoan heparan sulfate and providing carbon, nitrogen and sulfate sources for microorganisms. The sequence is that of Heparin-sulfate lyase (hepC) from Pedobacter heparinus (strain ATCC 13125 / DSM 2366 / CIP 104194 / JCM 7457 / NBRC 12017 / NCIMB 9290 / NRRL B-14731 / HIM 762-3).